The sequence spans 887 residues: Pyruvate, phosphate dikinase 2 (887 aa).

A Phosphothreonine; by PDRP1 modification is found at threonine 467. Histidine 469 serves as the catalytic Tele-phosphohistidine intermediate. Residues arginine 575, arginine 632, glutamate 761, glycine 782, threonine 783, asparagine 784, and aspartate 785 each coordinate substrate. Position 761 (glutamate 761) interacts with Mg(2+). Aspartate 785 provides a ligand contact to Mg(2+). The active-site Proton donor is cysteine 847.

The protein belongs to the PEP-utilizing enzyme family. It depends on Mg(2+) as a cofactor.

Its subcellular location is the cytoplasm. It catalyses the reaction pyruvate + phosphate + ATP = phosphoenolpyruvate + AMP + diphosphate + H(+). Functionally, formation of phosphoenolpyruvate. This chain is Pyruvate, phosphate dikinase 2 (PPDK2), found in Oryza sativa subsp. japonica (Rice).